A 228-amino-acid polypeptide reads, in one-letter code: Protein CWC15 homolog A (228 aa).

The tract at residues 1-126 (MTTAARPTFE…DEDSDDDTAA (126 aa)) is disordered. The segment covering 24-34 (SQLSKQYSSRD) has biased composition (polar residues). Over residues 52-84 (EEVRSRDFRRELEERERVVARDKNRDRPTREHT) the composition is skewed to basic and acidic residues. The span at 102-124 (DADDPLTDEDGDEDSDEDSDDDT) shows a compositional bias: acidic residues. Residues 121 to 165 (DDDTAALLAELEKIKKERAEEKDRKELEQKAEEERIRMENILSGN) are a coiled coil.

Belongs to the CWC15 family. Identified in the spliceosome C complex. Component of the minor spliceosome, which splices U12-type introns.

It localises to the nucleus. Involved in pre-mRNA splicing as component of the spliceosome. The protein is Protein CWC15 homolog A (cwc15-a) of Xenopus laevis (African clawed frog).